The sequence spans 99 residues: Mitochondrial import receptor subunit TOM9-2 (99 aa).

The Cytoplasmic segment spans residues 2–51 (AAKRIGAGKSGGGDPNILARISNSEIVSQGRRAAGDAVEVSKKLLRSTGK). Residues 52–69 (AAWIAGTTFLILVVPLII) form a helical membrane-spanning segment. The Mitochondrial intermembrane segment spans residues 70–99 (EMDREAQINEIELQQASLLGAPPSPMQRGL).

It belongs to the Tom22 family. In terms of assembly, forms part of the preprotein translocase complex of the outer mitochondrial membrane (TOM complex) which consists of at least 6 different proteins (TOM5, TOM6, TOM7, TOM20, TOM22/TOM9 and TOM40). In terms of tissue distribution, expressed in young cotyledons, roots, flowers and leaves.

It localises to the mitochondrion outer membrane. In terms of biological role, central component of the receptor complex responsible for the recognition and translocation of cytosolically synthesized mitochondrial preproteins. Together with TOM20 functions as the transit peptide receptor at the surface of the mitochondrion outer membrane and facilitates the movement of preproteins into the translocation pore. This is Mitochondrial import receptor subunit TOM9-2 (TOM9-2) from Arabidopsis thaliana (Mouse-ear cress).